The chain runs to 509 residues: Src substrate cortactin (509 aa).

The tract at residues 1–28 is disordered; it reads MWKASAGHAVSITQDDGGADDWETDPDF. Residues 17 to 28 show a composition bias toward acidic residues; that stretch reads GGADDWETDPDF. 5 Cortactin repeats span residues 80–116, 117–153, 154–190, 191–227, and 228–264; these read ASHGYGGKFGVEQDRMDKSAVGHEYQSKLSKHCSQVD, SVRGFGGKFGVQMDRVDQSAVGFEYQGKTEKHASQKD, YSSGFGGKYGVQADRVDKSAVGFDYQGKTEKHESQKD, YSKGFGGKYGIDKDKVDKSAVGFEYQGKTEKHESQKD, and YVKGFGGKFGVQTDRQDKCALGWDHQEKLQLHESQKD. 2 positions are modified to N6-acetyllysine: Lys-87 and Lys-107. Position 113 is a phosphoserine (Ser-113). The residue at position 119 (Arg-119) is an Omega-N-methylarginine. The residue at position 124 (Lys-124) is an N6-acetyllysine. Lys-144 is modified (N6-acetyllysine; alternate). Residue Lys-144 forms a Glycyl lysine isopeptide (Lys-Gly) (interchain with G-Cter in SUMO1); alternate linkage. Lys-144 is covalently cross-linked (Glycyl lysine isopeptide (Lys-Gly) (interchain with G-Cter in SUMO2); alternate). Ser-150 carries the post-translational modification Phosphoserine. 3 positions are modified to N6-acetyllysine: Lys-152, Lys-161, and Lys-171. An N6-acetyllysine; alternate modification is found at Lys-181. Residue Lys-181 forms a Glycyl lysine isopeptide (Lys-Gly) (interchain with G-Cter in SUMO1); alternate linkage. Lys-181 participates in a covalent cross-link: Glycyl lysine isopeptide (Lys-Gly) (interchain with G-Cter in SUMO2); alternate. An N6-acetyllysine mark is found at Lys-193 and Lys-198. Lys-218 participates in a covalent cross-link: Glycyl lysine isopeptide (Lys-Gly) (interchain with G-Cter in SUMO1). The residue at position 235 (Lys-235) is an N6-acetyllysine. Ser-261 bears the Phosphoserine mark. A Cortactin 6; truncated repeat occupies 265–287; that stretch reads YAKGFGGKYGVQKDRMDKNASTF. Residues Lys-267, Lys-272, Lys-277, and Lys-309 each carry the N6-acetyllysine modification. Residues 311-364 adopt a coiled-coil conformation; that stretch reads SNIRANFENLAKEREQEDRRKAEAERAQRMAQERQEQEEARRKLEEQARAKKQT. The segment at 318–409 is disordered; sequence ENLAKEREQE…EPEPEYSTEA (92 aa). Positions 320-359 are enriched in basic and acidic residues; sequence LAKEREQEDRRKAEAERAQRMAQERQEQEEARRKLEEQAR. Position 364 is a phosphothreonine (Thr-364). 4 positions are modified to phosphoserine: Ser-368, Ser-370, Ser-380, and Ser-381. Tyr-384 is modified (phosphotyrosine; by FAK1). A compositionally biased stretch (low complexity) spans 393–406; sequence EPSYGSSEPEPEYS. A Phosphotyrosine modification is found at Tyr-405. Ser-406 carries the post-translational modification Phosphoserine. Phosphotyrosine; by FAK1 occurs at positions 429 and 445. Phosphotyrosine; by SRC occurs at positions 445 and 448. In terms of domain architecture, SH3 spans 451–509; it reads DLGITAIALYDYQAAGDDEISFDPDDVITNIEMIDDGWWRGVCKGRYGLFPANYVELRQ.

In terms of assembly, part of a complex composed of NEDD9, AURKA and CTTN; within the complex NEDD9 acts as a scaffold protein and is required for complex formation. Interacts (via N-terminus) with NEDD9. Identified in a complex containing FGFR4, NCAM1, CDH2, PLCG1, FRS2, SRC, SHC1, GAP43 and CTTN. Forms a complex with ABL1 and MYLK. Interacts with SHANK2 and SHANK3 (via its SH3 domain). Interacts with PLXDC2 and SRCIN1. Interacts with SAMSN1 (via SH3 domain). Interacts (via SH3 domain) with ASAP1 (via Pro-rich region). Interacts with FER. Interacts with FGD1. Interacts with ABL2. Interacts with CTTNBP2NL; this interaction may target CTTN to stress fibers. Interacts with CTTNBP2; this interaction may target CTTN at the cell cortex or dendritic spines. Interacts (via SH3 domain) with DNM2. Interacts with ACTN1. Interacts with KCNA2 (via non-phosphorylated C-terminus). Interacts with PTK2/FAK1. Interacts with KCNH1. Interacts (via SH3 domain) with DIP2A (via N-terminus); the interaction enhances CTTN acetylation and is required for proper synaptic transmission. Interacts with XIRP1 (via N-terminus); the interaction promotes CTTN localization to intercalated disks in cardiomyocytes. Post-translationally, acetylated. In terms of processing, phosphorylated by FER. Phosphorylated in response to FGR activation. Phosphorylation by SRC promotes MYLK binding. Tyrosine phosphorylation in transformed cells may contribute to cellular growth regulation and transformation. Phosphorylated by PKN2 at both serine and threonine residues in a GTP-bound Rac1-dependent manner in hyaluronan-induced astrocytes and hence down-regulated CTTN ability to associate with filamentous actin. Phosphorylated on tyrosine residues in response to CHRM1 activation. Phosphorylated by PTK2/FAK1 in response to cell adhesion. As to expression, detected in liver (at protein level).

Its subcellular location is the cytoplasm. It is found in the cytoskeleton. The protein resides in the cell projection. It localises to the lamellipodium. The protein localises to the ruffle. Its subcellular location is the dendrite. It is found in the cell membrane. The protein resides in the podosome. It localises to the cell junction. The protein localises to the focal adhesion. Its subcellular location is the membrane. It is found in the clathrin-coated pit. The protein resides in the dendritic spine. It localises to the cell cortex. The protein localises to the endoplasmic reticulum. Contributes to the organization of the actin cytoskeleton and cell shape. Plays a role in the formation of lamellipodia and in cell migration. Plays a role in the regulation of neuron morphology, axon growth and formation of neuronal growth cones. Through its interaction with CTTNBP2, involved in the regulation of neuronal spine density. Plays a role in focal adhesion assembly and turnover. In complex with ABL1 and MYLK regulates cortical actin-based cytoskeletal rearrangement critical to sphingosine 1-phosphate (S1P)-mediated endothelial cell (EC) barrier enhancement. Plays a role in intracellular protein transport and endocytosis, and in modulating the levels of potassium channels present at the cell membrane. Plays a role in receptor-mediated endocytosis via clathrin-coated pits. Required for stabilization of KCNH1 channels at the cell membrane. The sequence is that of Src substrate cortactin from Rattus norvegicus (Rat).